The sequence spans 299 residues: MWFKNLQLHRFSAPWSPSADEVEASLAKHAFFPGTSLEMQTQGWASPRDNGQLVHAVGRQMLLTLRTEKKLLPATVVNQVTKARAAEVEEQQGYKPGRKQLRELKEQVTEELLPRAFSIRRDTRVWIDPDNGWLAIDAASTAKADEVRGMLFKALDALPLANLHVNQSPVAAMTDWLSTDVAPAGFTVDQEIELQSGSESKATVRYVRHPLDAEDLRRHISGGKRCTRLAMTWNDRVSFVLTDSLAIKRVAPLDVIKEQADGTVSDEDERFDADFTLMAGELAGMLGDLTEALGGERKA.

The protein belongs to the RdgC family.

It localises to the cytoplasm. The protein resides in the nucleoid. In terms of biological role, may be involved in recombination. This is Recombination-associated protein RdgC from Cupriavidus pinatubonensis (strain JMP 134 / LMG 1197) (Cupriavidus necator (strain JMP 134)).